A 423-amino-acid chain; its full sequence is Histidine--tRNA ligase (423 aa).

Belongs to the class-II aminoacyl-tRNA synthetase family. As to quaternary structure, homodimer.

Its subcellular location is the cytoplasm. It carries out the reaction tRNA(His) + L-histidine + ATP = L-histidyl-tRNA(His) + AMP + diphosphate + H(+). This Shewanella loihica (strain ATCC BAA-1088 / PV-4) protein is Histidine--tRNA ligase.